A 146-amino-acid chain; its full sequence is Anti-sigma F factor (146 aa).

This sequence belongs to the anti-sigma-factor family.

The enzyme catalyses L-seryl-[protein] + ATP = O-phospho-L-seryl-[protein] + ADP + H(+). It catalyses the reaction L-threonyl-[protein] + ATP = O-phospho-L-threonyl-[protein] + ADP + H(+). Its function is as follows. Binds to sigma F and blocks its ability to form an RNA polymerase holoenzyme (E-sigma F). Phosphorylates SpoIIAA on a serine residue. This phosphorylation may enable SpoIIAA to act as an anti-anti-sigma factor that counteracts SpoIIAB and thus releases sigma F from inhibition. The protein is Anti-sigma F factor of Shouchella clausii (strain KSM-K16) (Alkalihalobacillus clausii).